An 84-amino-acid polypeptide reads, in one-letter code: Small ribosomal subunit protein uS17 (84 aa).

This sequence belongs to the universal ribosomal protein uS17 family. In terms of assembly, part of the 30S ribosomal subunit.

Its function is as follows. One of the primary rRNA binding proteins, it binds specifically to the 5'-end of 16S ribosomal RNA. This is Small ribosomal subunit protein uS17 from Ureaplasma parvum serovar 3 (strain ATCC 27815 / 27 / NCTC 11736).